The following is a 307-amino-acid chain: Heme A synthase (307 aa).

Residues 1-8 (MQHNRYLK) lie on the Cytoplasmic side of the membrane. Residues 9–29 (WFAVAATVGMLLILLGGALVT) traverse the membrane as a helical segment. Residues 30–56 (KTDSGLGCGRNWPDCNGSLIPKEITPE) lie on the Extracellular side of the membrane. Cys-37 and Cys-44 are disulfide-bonded. The helical transmembrane segment at 57 to 77 (VLIEFSHRLVTGVVSISILVL) threads the bilayer. The active site involves Glu-60. Residue His-63 participates in heme o binding. Residues 78-92 (TVWTWRKLGHIREVK) lie on the Cytoplasmic side of the membrane. The helical transmembrane segment at 93–113 (LLGFLAMFFLIAQALIGAAQV) threads the bilayer. Residues 114–123 (LWGQGDFILA) are Extracellular-facing. The chain crosses the membrane as a helical span at residues 124–144 (LHFGISLISFAAVLLLSMIVF). Heme o is bound at residue His-125. Residues 145–161 (EVDRKFDADNVFIGKKL) lie on the Cytoplasmic side of the membrane. The chain crosses the membrane as a helical span at residues 162–182 (RWHTIAVTIYSYLVVYTGALV). At 183–218 (RHTDSSLICPDWPFCYNETPLASPNNMYEWVQMGHR) the chain is on the extracellular side. Cys-191 and Cys-197 are oxidised to a cystine. Position 217 (His-217) interacts with heme b. Residues 219-239 (LAVLIIFIWIAYITWHAVKEY) form a helical membrane-spanning segment. The Cytoplasmic segment spans residues 240 to 247 (KNQRVVYY). Residues 248-268 (GWIIAFTIVFLQVIAGMLVVL) traverse the membrane as a helical segment. At 269-276 (TKLNLTVA) the chain is on the extracellular side. The helical transmembrane segment at 277 to 297 (LMHSLLISLLFGLLCYMIMLV) threads the bilayer. His-279 contributes to the heme b binding site. At 298-307 (ARSNYNEKMK) the chain is on the cytoplasmic side.

This sequence belongs to the COX15/CtaA family. Type 1 subfamily. In terms of assembly, interacts with CtaB. Heme b is required as a cofactor.

Its subcellular location is the cell membrane. It carries out the reaction Fe(II)-heme o + 2 A + H2O = Fe(II)-heme a + 2 AH2. The protein operates within porphyrin-containing compound metabolism; heme A biosynthesis; heme A from heme O: step 1/1. Its function is as follows. Catalyzes the conversion of heme O to heme A by two successive hydroxylations of the methyl group at C8. The first hydroxylation forms heme I, the second hydroxylation results in an unstable dihydroxymethyl group, which spontaneously dehydrates, resulting in the formyl group of heme A. The chain is Heme A synthase from Lysinibacillus sphaericus (strain C3-41).